We begin with the raw amino-acid sequence, 413 residues long: Eukaryotic initiation factor 4A-14 (413 aa).

Residues 40-68 (DSFDAMGLQENLLRGIYAYGFEKPSAIQQ) carry the Q motif motif. Positions 71–241 (IVPFCKGLDV…RKFMSKPVRI (171 aa)) constitute a Helicase ATP-binding domain. 84 to 91 (AQSGTGKT) is a binding site for ATP. The DEAD box motif lies at 189 to 192 (DEAD). The Helicase C-terminal domain maps to 252-413 (GIKQFYVNVD…ELPANVADLL (162 aa)).

This sequence belongs to the DEAD box helicase family. eIF4A subfamily. As to quaternary structure, eIF4F is a multi-subunit complex, the composition of which varies with external and internal environmental conditions. It is composed of at least EIF4A, EIF4E and EIF4G.

The enzyme catalyses ATP + H2O = ADP + phosphate + H(+). Functionally, ATP-dependent RNA helicase which is a subunit of the eIF4F complex involved in cap recognition and is required for mRNA binding to ribosome. In the current model of translation initiation, eIF4A unwinds RNA secondary structures in the 5'-UTR of mRNAs which is necessary to allow efficient binding of the small ribosomal subunit, and subsequent scanning for the initiator codon. This is Eukaryotic initiation factor 4A-14 from Nicotiana tabacum (Common tobacco).